We begin with the raw amino-acid sequence, 194 residues long: PBAN-type neuropeptides (194 aa).

The N-terminal stretch at 1–23 (MFNQTQLFVFLAVFTTSSVLGNN) is a signal peptide. Position 47 is a leucine amide (L47). The propeptide occupies 51–94 (SLRISTEDNRQAFFKLLEAADALKYYYDQLPYEMQADEPETRVT). Leucine amide is present on residues L103, L123, L159, and L169. Positions 172–194 (ELSYDMMPNKIRVVRSTNKTRST) are excised as a propeptide.

The protein belongs to the pyrokinin family. Expressed in the subesophageal ganglions. Not found in corpora cardiaca, corpora allata and thoracic ganglia.

The protein resides in the secreted. Functionally, a hormone that controls sex pheromone production in females and pheromone responsiveness in male. Also mediates visceral muscle contractile activity (myotropic activity). This Helicoverpa zea (Corn earworm moth) protein is PBAN-type neuropeptides.